The sequence spans 569 residues: Proline--tRNA ligase (569 aa).

This sequence belongs to the class-II aminoacyl-tRNA synthetase family. ProS type 1 subfamily. Homodimer.

The protein resides in the cytoplasm. The catalysed reaction is tRNA(Pro) + L-proline + ATP = L-prolyl-tRNA(Pro) + AMP + diphosphate. In terms of biological role, catalyzes the attachment of proline to tRNA(Pro) in a two-step reaction: proline is first activated by ATP to form Pro-AMP and then transferred to the acceptor end of tRNA(Pro). As ProRS can inadvertently accommodate and process non-cognate amino acids such as alanine and cysteine, to avoid such errors it has two additional distinct editing activities against alanine. One activity is designated as 'pretransfer' editing and involves the tRNA(Pro)-independent hydrolysis of activated Ala-AMP. The other activity is designated 'posttransfer' editing and involves deacylation of mischarged Ala-tRNA(Pro). The misacylated Cys-tRNA(Pro) is not edited by ProRS. The polypeptide is Proline--tRNA ligase (Campylobacter jejuni (strain RM1221)).